A 213-amino-acid polypeptide reads, in one-letter code: Phosphatidylethanolamine N-methyltransferase A (213 aa).

Residues 1 to 21 (MIVEHAIDYIDYLMNYVDFTE) are Lumenal-facing. The segment at residues 22 to 42 (KYFLLTIACVVFNPTWWNITA) is an intramembrane region (helical). Residues 43–54 (RMEYKTKFMTKI) are Lumenal-facing. A helical membrane pass occupies residues 55-75 (CGSKENGCYLLAFLIFSLGIL). Topologically, residues 76-102 (RDWLFSEALIRQPIFQEFDRFEVEVLS) are cytoplasmic. The helical transmembrane segment at 103 to 123 (YILYGFGGILVLAAYLKLGIT) threads the bilayer. An S-adenosyl-L-methionine-binding site is contributed by 107-109 (GFG). Residues 124-166 (GTYLGDYFGILMKERVTGFPFNVMNNPMYNGSVMLFIAHALSY) are Lumenal-facing. Residues 167-187 (KSVAGLVLSFVVYVVYKFALI) form a helical membrane-spanning segment. At 188–213 (FEESFTNYIYSTAAANAAKKNKSKSK) the chain is on the cytoplasmic side. Position 189 to 190 (189 to 190 (EE)) interacts with S-adenosyl-L-methionine.

This sequence belongs to the class VI-like SAM-binding methyltransferase superfamily. PEMT/PEM2 methyltransferase family.

The protein localises to the endoplasmic reticulum membrane. Its subcellular location is the mitochondrion membrane. It carries out the reaction a 1,2-diacyl-sn-glycero-3-phospho-N-methylethanolamine + S-adenosyl-L-methionine = a 1,2-diacyl-sn-glycero-3-phospho-N,N-dimethylethanolamine + S-adenosyl-L-homocysteine + H(+). The enzyme catalyses a 1,2-diacyl-sn-glycero-3-phospho-N,N-dimethylethanolamine + S-adenosyl-L-methionine = a 1,2-diacyl-sn-glycero-3-phosphocholine + S-adenosyl-L-homocysteine + H(+). It catalyses the reaction a 1,2-diacyl-sn-glycero-3-phosphoethanolamine + S-adenosyl-L-methionine = a 1,2-diacyl-sn-glycero-3-phospho-N-methylethanolamine + S-adenosyl-L-homocysteine + H(+). Its pathway is phospholipid metabolism; phosphatidylcholine biosynthesis. Functionally, catalyzes the three sequential steps of the methylation pathway of phosphatidylcholine biosynthesis, the SAM-dependent methylation of phosphatidylethanolamine (PE) to phosphatidylmonomethylethanolamine (PMME), PMME to phosphatidyldimethylethanolamine (PDME), and PDME to phosphatidylcholine (PC). The chain is Phosphatidylethanolamine N-methyltransferase A (pemtA) from Dictyostelium discoideum (Social amoeba).